Consider the following 232-residue polypeptide: Putative homeobox protein NANOG2 (232 aa).

Positions 1 to 39 (MDLPIQDSHDSSTSPKGKQPTTAEKSATKKEDKVPVKKQ) are disordered. A compositionally biased stretch (polar residues) spans 11 to 25 (SSTSPKGKQPTTAEK). Basic and acidic residues predominate over residues 26 to 35 (SATKKEDKVP). Tandem repeats lie at residues 123-127 (WSNQT), 128-132 (WNNST), 133-137 (WSNQT), 143-147 (WSNHS), 148-152 (WNTQT), 153-157 (WCTQS), 158-162 (WNNQA), and 163-167 (WNSPF). The segment at 123-167 (WSNQTWNNSTWSNQTQNIQSWSNHSWNTQTWCTQSWNNQAWNSPF) is 8 X repeats starting with a Trp in each unit. Residues 123–167 (WSNQTWNNSTWSNQTQNIQSWSNHSWNTQTWCTQSWNNQAWNSPF) are sufficient for transactivation activity. Residues 168-232 (YNCGEESLQS…YSTNMXXEDV (65 aa)) are sufficient for strong transactivation activity.

Belongs to the Nanog homeobox family.

Its subcellular location is the nucleus. Probable transcriptional regulator. In Pan paniscus (Pygmy chimpanzee), this protein is Putative homeobox protein NANOG2 (NANOGP1).